Consider the following 420-residue polypeptide: Probable 3-isopropylmalate dehydratase large subunit (420 aa).

[4Fe-4S] cluster is bound by residues Cys301, Cys361, and Cys364.

Belongs to the aconitase/IPM isomerase family. LeuC type 2 subfamily. Heterodimer of LeuC and LeuD. It depends on [4Fe-4S] cluster as a cofactor.

It carries out the reaction (2R,3S)-3-isopropylmalate = (2S)-2-isopropylmalate. Its pathway is amino-acid biosynthesis; L-leucine biosynthesis; L-leucine from 3-methyl-2-oxobutanoate: step 2/4. Its function is as follows. Catalyzes the isomerization between 2-isopropylmalate and 3-isopropylmalate, via the formation of 2-isopropylmaleate. The polypeptide is Probable 3-isopropylmalate dehydratase large subunit (Methanosarcina mazei (strain ATCC BAA-159 / DSM 3647 / Goe1 / Go1 / JCM 11833 / OCM 88) (Methanosarcina frisia)).